The primary structure comprises 264 residues: NADH-quinone oxidoreductase subunit B 1 (264 aa).

[4Fe-4S] cluster-binding residues include cysteine 42, cysteine 43, cysteine 108, and cysteine 138.

The protein belongs to the complex I 20 kDa subunit family. NDH-1 is composed of 14 different subunits. Subunits NuoB, C, D, E, F, and G constitute the peripheral sector of the complex. [4Fe-4S] cluster serves as cofactor.

The protein resides in the cell membrane. The catalysed reaction is a quinone + NADH + 5 H(+)(in) = a quinol + NAD(+) + 4 H(+)(out). Its function is as follows. NDH-1 shuttles electrons from NADH, via FMN and iron-sulfur (Fe-S) centers, to quinones in the respiratory chain. The immediate electron acceptor for the enzyme in this species is believed to be ubiquinone. Couples the redox reaction to proton translocation (for every two electrons transferred, four hydrogen ions are translocated across the cytoplasmic membrane), and thus conserves the redox energy in a proton gradient. This Chloroflexus aurantiacus (strain ATCC 29366 / DSM 635 / J-10-fl) protein is NADH-quinone oxidoreductase subunit B 1.